The following is a 514-amino-acid chain: MAKISEFERQRQENIQRNKELLKSLNLDSLSQSIKRELPRASETKKRKTTPRTKAVKKEDVEPSRRSRRIAGIKSELENPEEYNHKKSGSLKFEDKVIKSDSTEPEVKQEEKEELSEDIKNDNKVLHRLQALGDKFSAGDFFDIIQKNPIQYDDKVLQSTRDEFDKLKIYEKHNPLDIKISHTRITAINFHPSTTDRVVAAGDTNGNVGIWAVDSGEDDSEPTISILRPHGKAISRILTPVAEQNKLYSASYDGSVRVLDLNKLASTEVVYLNDPYENDDYALGVSDINFCASDANLLYMTTLSGSFHKHDIRTPFKPLKSKDILRLHDKKIGSFSINPNNTYQIATASLDRTLRIWDLRNVSKANAEWSEFENQISPHLYGSFSSRLSVSCVDWNSENRLVCNGYDDYINIFDLNEESLIPDNLKAFNKIKHNCQTGRWVSILKSKWQVAPEDGVQKFVIANMNRALDIYDQKGQIIAHLTDSVGAVPAVCGFHPTKNWVVGGSASGKVYLFE.

Positions 26–116 are disordered; sequence NLDSLSQSIK…VKQEEKEELS (91 aa). Positions 34–44 are enriched in basic and acidic residues; that stretch reads IKRELPRASET. Positions 45 to 55 are enriched in basic residues; that stretch reads KKRKTTPRTKA. Basic and acidic residues-rich tracts occupy residues 56–65 and 92–116; these read VKKEDVEPSR and KFEDKVIKSDSTEPEVKQEEKEELS. 7 WD repeats span residues 180-221, 229-269, 280-320, 327-367, 385-423, 438-481, and 483-514; these read ISHT…DDSE, PHGK…STEV, DYAL…KPLK, LHDK…KANA, SSRLSVSCVDWNSENRLVCNGYDDYINIFDLNEESLIPD, GRWV…IAHL, and DSVGAVPAVCGFHPTKNWVVGGSASGKVYLFE.

It belongs to the WD repeat DDB2/WDR76 family.

Functionally, DNA-binding protein that binds to both single- and double-stranded DNA. Binds preferentially to UV-damaged DNA. May be involved in DNA-metabolic processes. This Scheffersomyces stipitis (strain ATCC 58785 / CBS 6054 / NBRC 10063 / NRRL Y-11545) (Yeast) protein is DNA damage-binding protein CMR1 (PRW1).